The primary structure comprises 270 residues: MFLVGSLVVLCGLLAQSTAQLAGLPLPLGQGLPLPLGQGLPLPLGQGLPLAVSPALPSNPTDLLAGNFANALSGGLLSGGLLGILENIPLLDVIKSGGGSSNGLVGGLLGKLTSSVPLLNNILDIKITDPRLLELGLVQSPDGHRLYATIPLSLKLQVNMPVVGSFLQLAVKLNITAEIVAMKDNQGRIHLVLGDCTHSPGSLQITLLNGVTPVQSSLDSLTGILTKVLPELIQGKVCPLINGILSGLDVTLVHNIAELLIHGIQFVIKV.

A signal peptide spans 1–19 (MFLVGSLVVLCGLLAQSTA). The segment at 104–109 (LVGGLL) is important for surfactant activity and antibacterial properties. N-linked (GlcNAc...) asparagine glycosylation occurs at asparagine 174. The cysteines at positions 196 and 238 are disulfide-linked.

Belongs to the BPI/LBP/Plunc superfamily. Plunc family. In terms of assembly, monomer. Interacts (via N-terminus) with SCNN1B, a subunit of the heterotrimeric epithelial sodium channel (ENaC); this inhibits proteolytic activation of ENaC. In terms of tissue distribution, detected in adult nasal epithelium, heart, lung, spleen, testis and salivary gland, and in embryonic nasal epithelium, lung, salivary gland and thymus.

Its subcellular location is the secreted. Lipid-binding protein which shows high specificity for the surfactant phospholipid dipalmitoylphosphatidylcholine (DPPC). Plays a role in the innate immune responses of the upper airways. Reduces the surface tension in secretions from airway epithelia and inhibits the formation of biofilm by pathogenic Gram-negative bacteria, such as P.aeruginosa and K.pneumoniae. Negatively regulates proteolytic cleavage of SCNN1G, an event that is required for activation of the epithelial sodium channel (ENaC), and thereby contributes to airway surface liquid homeostasis and proper clearance of mucus. Plays a role in the airway inflammatory response after exposure to irritants. May attract macrophages and neutrophils. The polypeptide is BPI fold-containing family A member 1 (Bpifa1) (Rattus norvegicus (Rat)).